The sequence spans 316 residues: UDP-N-acetylglucosamine transporter yea4 (316 aa).

Over 1–3 (MIA) the chain is Cytoplasmic. Residues 4–24 (SALSFIFGGCCSNAYALEALV) traverse the membrane as a helical segment. At 25-31 (REFPSSG) the chain is on the lumenal side. The helical transmembrane segment at 32 to 52 (ILITFSQFILITIEGLIYFLL) threads the bilayer. Over 53 to 67 (NDVQSLKHPKVPRKR) the chain is Cytoplasmic. A helical membrane pass occupies residues 68 to 88 (WFVVVVMFFAINVLNNVALGF). Over 89 to 120 (DISVPVHIILRSSGPLTTMAVGRILAGKRYSS) the chain is Lumenal. A helical transmembrane segment spans residues 121–141 (LQIGSVFILTIGVIIATLGNA). The Cytoplasmic portion of the chain corresponds to 142-153 (KDLHLHVESMTR). The helical transmembrane segment at 154–174 (FGIGFTILVITQILGAIMGLV) threads the bilayer. Residues 175–187 (LENTYRIYGSDWR) are Lumenal-facing. The helical transmembrane segment at 188–208 (ESLFYTHALSLPFFLFLLRPI) threads the bilayer. Topologically, residues 209–214 (RSQWND) are cytoplasmic. A helical membrane pass occupies residues 215–235 (LFAIHTKGFLNLPSGVWYLCF). Over 236–274 (NTLAQYFCVRGVNALGAETSALTVSVVLNVRKFVSLCLS) the chain is Lumenal. Residues 275-295 (LILFENEMGPAVKFGALLVFG) traverse the membrane as a helical segment. At 296–316 (SSAVYASARSKPKTNGLKKND) the chain is on the cytoplasmic side.

This sequence belongs to the nucleotide-sugar transporter family. SLC35B subfamily.

The protein resides in the endoplasmic reticulum. Its subcellular location is the endoplasmic reticulum membrane. Sugar transporter that specifically mediates the transport of UDP-N-acetylglucosamine (UDP-GlcNAc) and is required for cell wall chitin synthesis. The sequence is that of UDP-N-acetylglucosamine transporter yea4 (yea4) from Schizosaccharomyces pombe (strain 972 / ATCC 24843) (Fission yeast).